A 306-amino-acid polypeptide reads, in one-letter code: Non-specific ribonucleoside hydrolase RihC (306 aa).

His-235 is an active-site residue.

It belongs to the IUNH family. RihC subfamily.

Its function is as follows. Hydrolyzes both purine and pyrimidine ribonucleosides with a broad-substrate specificity. This is Non-specific ribonucleoside hydrolase RihC from Salmonella typhi.